We begin with the raw amino-acid sequence, 484 residues long: tRNA sulfurtransferase (484 aa).

The THUMP domain occupies 61–165; that stretch reads PLILDLLKRT…GDKMLLVEAR (105 aa). ATP is bound by residues 183 to 184, Lys-265, Gly-287, and Gln-296; that span reads LI. Cysteines 344 and 456 form a disulfide. A Rhodanese domain is found at 404-483; that stretch reads LTEKDIILDI…YQNVKVFNLP (80 aa). Catalysis depends on Cys-456, which acts as the Cysteine persulfide intermediate.

It belongs to the ThiI family.

The protein resides in the cytoplasm. It carries out the reaction [ThiI sulfur-carrier protein]-S-sulfanyl-L-cysteine + a uridine in tRNA + 2 reduced [2Fe-2S]-[ferredoxin] + ATP + H(+) = [ThiI sulfur-carrier protein]-L-cysteine + a 4-thiouridine in tRNA + 2 oxidized [2Fe-2S]-[ferredoxin] + AMP + diphosphate. The catalysed reaction is [ThiS sulfur-carrier protein]-C-terminal Gly-Gly-AMP + S-sulfanyl-L-cysteinyl-[cysteine desulfurase] + AH2 = [ThiS sulfur-carrier protein]-C-terminal-Gly-aminoethanethioate + L-cysteinyl-[cysteine desulfurase] + A + AMP + 2 H(+). The protein operates within cofactor biosynthesis; thiamine diphosphate biosynthesis. In terms of biological role, catalyzes the ATP-dependent transfer of a sulfur to tRNA to produce 4-thiouridine in position 8 of tRNAs, which functions as a near-UV photosensor. Also catalyzes the transfer of sulfur to the sulfur carrier protein ThiS, forming ThiS-thiocarboxylate. This is a step in the synthesis of thiazole, in the thiamine biosynthesis pathway. The sulfur is donated as persulfide by IscS. The polypeptide is tRNA sulfurtransferase (Haemophilus ducreyi (strain 35000HP / ATCC 700724)).